The following is a 241-amino-acid chain: ATP-dependent Clp protease ATP-binding subunit CLPT2, chloroplastic (241 aa).

The N-terminal 75 residues, Met-1–Ser-75, are a transit peptide targeting the chloroplast. Residues Lys-91–Gly-237 enclose the Clp R domain. Repeat regions lie at residues Trp-94–Ala-159 and Leu-171–Gly-237.

It belongs to the ClpA/ClpB family. As to quaternary structure, monomer and homodimer. The dimers monomerize before association to the P-ring. Component of the chloroplastic Clp protease core complex which consist of at least 16 proteins: CLPP4 (3 copies), CLPP5 (3 copies), CLPR4 (2 copies), ClpP1 (1 copy), CLPP6 (1 copy), CLPR2 (1 copy), CLPT1 (1 copy), CLPT2 (1 copy) and 3 copies of CLPP3 and/or CLPR1 and/or CLPR3. Interacts with AHK2. Interacts with CPN21. No interactions with CLPS1.

The protein localises to the plastid. The protein resides in the chloroplast. Functionally, accessory protein regulating the assembly of the plastidial Clp protease system. CLPT1 first binds to the heptameric P-ring containing the CLP3-6 subunits followed by CLPT2, and only then does the P-ring combine with the R-ring composed of the clpP1 and CLPR1-4 subunits. Once the core complex is fully assembled, it then associates to the CLPC chaperone partner to form the functional protease. CLPT2 and CLPT1 are partially redundant. The polypeptide is ATP-dependent Clp protease ATP-binding subunit CLPT2, chloroplastic (Arabidopsis thaliana (Mouse-ear cress)).